Reading from the N-terminus, the 157-residue chain is uncharacterized protein (157 aa).

An N-acetyltransferase domain is found at 3–157 (FTLEDMTEEE…TNIRMRKQLC (155 aa)).

It belongs to the acetyltransferase family.

This is an uncharacterized protein from Bacillus subtilis (strain 168).